Consider the following 356-residue polypeptide: sn-glycerol-3-phosphate import ATP-binding protein UgpC (356 aa).

The ABC transporter domain occupies 4–235; that stretch reads LKLQAVTKSW…PASRFVASFI (232 aa). 37–44 contacts ATP; the sequence is GPSGCGKS.

It belongs to the ABC transporter superfamily. sn-glycerol-3-phosphate importer (TC 3.A.1.1.3) family. The complex is composed of two ATP-binding proteins (UgpC), two transmembrane proteins (UgpA and UgpE) and a solute-binding protein (UgpB).

The protein resides in the cell inner membrane. The catalysed reaction is sn-glycerol 3-phosphate(out) + ATP + H2O = sn-glycerol 3-phosphate(in) + ADP + phosphate + H(+). Functionally, part of the ABC transporter complex UgpBAEC involved in sn-glycerol-3-phosphate (G3P) import. Responsible for energy coupling to the transport system. The protein is sn-glycerol-3-phosphate import ATP-binding protein UgpC of Salmonella paratyphi A (strain ATCC 9150 / SARB42).